The primary structure comprises 503 residues: MNQKKLSLFGFFALTASMVLTVYEYPTFATSKLHLVFFLLLGGLLWFLPVALCAAEMATVEGWKNGGIFSWVSQTLGERFGFAAIFFQWFQITVGFVTMIYFILGALSYVLNFQALNTDPLIKFIGLLIIFWGLTFSQLGGTQRTAKLVKAGFVVGIVIPSVILFGLAAAYFIGGNPIEIPINSHAFVPDFSQVSTLVVFVSFILAYMGVEASASHINELENPKRNYPLAMILLVILAISLDAIGGFSVAAVIPQKELSLSAGVIQTFQTLILHFNHHLGWLVKVIALMIAFGVMGEVSSWVVGPSRGMFAAAQRGLLPKFLRKTNTHEVPVPLVMIQGIIVTLWGAVLTFGGGGNNLSFLVAISLTVVIYLVGYLLFFIVYFVLIYKKQNLKRTYNVPGKIIGKTIIAGIGFLLSIFALFISFVPPASIAKNETHTYQMILLISFVVTAILPFIIYELHDKKGHDTIEEPTHFKAGDVNPAIYPAARGEHHIIKKEEHILKH.

33–43 contacts L-glutamate; sequence LHLVFFLLLGG. A run of 7 helical transmembrane segments spans residues 35–55, 153–173, 194–214, 232–252, 366–386, 407–427, and 440–460; these read LVFFLLLGGLLWFLPVALCAA, FVVGIVIPSVILFGLAAAYFI, VSTLVVFVSFILAYMGVEASA, ILLVILAISLDAIGGFSVAAV, LTVVIYLVGYLLFFIVYFVLI, IIAGIGFLLSIFALFISFVPP, and MILLISFVVTAILPFIIYELH.

This sequence belongs to the amino acid-polyamine-organocation (APC) superfamily. Glutamate:GABA antiporter (GGA) (TC 2.A.3.7) family.

The protein localises to the cell membrane. It catalyses the reaction 4-aminobutanoate(in) + L-glutamate(out) = 4-aminobutanoate(out) + L-glutamate(in). Functionally, involved in glutaminase-dependent acid resistance. Exchanges extracellular glutamate (Glu) for intracellular gamma-aminobutyric acid (GABA) under acidic conditions. The protein is Glutamate/gamma-aminobutyrate antiporter of Lactococcus lactis subsp. cremoris (strain MG1363).